The sequence spans 265 residues: Tryptophan 2,3-dioxygenase (265 aa).

Substrate-binding positions include 38–42 (FIVVH) and arginine 104. Histidine 223 contacts heme. Threonine 237 contributes to the substrate binding site.

It belongs to the tryptophan 2,3-dioxygenase family. As to quaternary structure, homotetramer. Heme serves as cofactor.

It catalyses the reaction L-tryptophan + O2 = N-formyl-L-kynurenine. The protein operates within amino-acid degradation; L-tryptophan degradation via kynurenine pathway; L-kynurenine from L-tryptophan: step 1/2. Heme-dependent dioxygenase that catalyzes the oxidative cleavage of the L-tryptophan (L-Trp) pyrrole ring and converts L-tryptophan to N-formyl-L-kynurenine. Catalyzes the oxidative cleavage of the indole moiety. The chain is Tryptophan 2,3-dioxygenase from Anaeromyxobacter dehalogenans (strain 2CP-C).